A 520-amino-acid polypeptide reads, in one-letter code: Protein RCC2 (520 aa).

The disordered stretch occupies residues 1–78 (MPRKKGAAWE…RPATAGKAAG (78 aa)). Ser-14 bears the Phosphoserine mark. Position 18 is a phosphothreonine (Thr-18). A compositionally biased stretch (basic residues) spans 22–34 (GPRRRGGPAGRKR). Ser-41, Ser-42, Ser-43, Ser-44, Ser-48, and Ser-49 each carry phosphoserine. Low complexity predominate over residues 69–78 (RPATAGKAAG). N6-acetyllysine is present on residues Lys-90 and Lys-122. 7 RCC1 repeats span residues 101 to 163 (KGQL…SLLI), 166 to 217 (EGKL…ALTD), 219 to 269 (GSVF…LMDC), 271 to 345 (GNLY…VLDS), 346 to 399 (QKRV…AVSE), 401 to 445 (GGLF…VAAD), and 446 to 499 (ESTI…VIAR). Position 291 is an N6-acetyllysine (Lys-291). The segment at 316 to 323 (KTKDGQIL) is required for interaction with RAC1. Thr-340 carries the phosphothreonine modification. Lys-375 carries the N6-acetyllysine modification.

As to quaternary structure, interacts with RAC1. Interacts with nucleotide-free and with GDP and GTP-bound forms of RAC1, with a slight preference for GDP-bound RAC1. Binds preferentially to the nucleotide-free form of RAC1. Interacts with CORO1C. Interacts with microtubules.

It is found in the nucleus. The protein resides in the nucleolus. The protein localises to the cytoplasm. Its subcellular location is the cytoskeleton. It localises to the chromosome. It is found in the centromere. The protein resides in the spindle. The protein localises to the midbody. Its subcellular location is the cell membrane. Functionally, multifunctional protein that may affect its functions by regulating the activity of small GTPases, such as RAC1 and RALA. Required for normal progress through the cell cycle, both during interphase and during mitosis. Required for the presence of normal levels of MAD2L1, AURKB and BIRC5 on inner centromeres during mitosis, and for normal attachment of kinetochores to mitotic spindles. Required for normal organization of the microtubule cytoskeleton in interphase cells. Functions as a guanine nucleotide exchange factor (GEF) for RALA. Interferes with the activation of RAC1 by guanine nucleotide exchange factors. Prevents accumulation of active, GTP-bound RAC1, and suppresses RAC1-mediated reorganization of the actin cytoskeleton and formation of membrane protrusions. Required for normal cellular responses to contacts with the extracellular matrix of adjacent cells, and for directional cell migration in response to a fibronectin gradient (in vitro). This is Protein RCC2 (Rcc2) from Mus musculus (Mouse).